A 206-amino-acid polypeptide reads, in one-letter code: Proteasome subunit beta type-2 (206 aa).

Belongs to the peptidase T1B family. As to quaternary structure, the 26S proteasome consists of a 20S proteasome core and two 19S regulatory subunits. The 20S proteasome core is composed of 28 subunits that are arranged in four stacked rings, resulting in a barrel-shaped structure. The two end rings are each formed by seven alpha subunits, and the two central rings are each formed by seven beta subunits. The catalytic chamber with the active sites is on the inside of the barrel.

It localises to the cytoplasm. The protein localises to the nucleus. Its function is as follows. Non-catalytic component of the proteasome, a multicatalytic proteinase complex which is characterized by its ability to cleave peptides with Arg, Phe, Tyr, Leu, and Glu adjacent to the leaving group at neutral or slightly basic pH. The proteasome has an ATP-dependent proteolytic activity. In Trypanosoma brucei brucei, this protein is Proteasome subunit beta type-2 (PSB4).